A 778-amino-acid polypeptide reads, in one-letter code: Lon protease (778 aa).

In terms of domain architecture, Lon N-terminal spans 6 to 207; sequence LPLMALRDMV…TVISMLNSNI (202 aa). 356-363 is a binding site for ATP; the sequence is GPPGVGKT. A Lon proteolytic domain is found at 592 to 773; the sequence is EDQIGSTTGL…DQVLKHALVG (182 aa). Active-site residues include S679 and K722.

Belongs to the peptidase S16 family. Homohexamer. Organized in a ring with a central cavity.

The protein localises to the cytoplasm. The enzyme catalyses Hydrolysis of proteins in presence of ATP.. ATP-dependent serine protease that mediates the selective degradation of mutant and abnormal proteins as well as certain short-lived regulatory proteins. Required for cellular homeostasis and for survival from DNA damage and developmental changes induced by stress. Degrades polypeptides processively to yield small peptide fragments that are 5 to 10 amino acids long. Binds to DNA in a double-stranded, site-specific manner. The sequence is that of Lon protease from Rickettsia conorii (strain ATCC VR-613 / Malish 7).